The chain runs to 131 residues: Phosphoribosyl-AMP cyclohydrolase (131 aa).

Asp78 is a binding site for Mg(2+). Cys79 contributes to the Zn(2+) binding site. Residues Asp80 and Asp82 each coordinate Mg(2+). Residues Cys96 and Cys103 each coordinate Zn(2+).

The protein belongs to the PRA-CH family. In terms of assembly, homodimer. Mg(2+) is required as a cofactor. It depends on Zn(2+) as a cofactor.

Its subcellular location is the cytoplasm. The catalysed reaction is 1-(5-phospho-beta-D-ribosyl)-5'-AMP + H2O = 1-(5-phospho-beta-D-ribosyl)-5-[(5-phospho-beta-D-ribosylamino)methylideneamino]imidazole-4-carboxamide. Its pathway is amino-acid biosynthesis; L-histidine biosynthesis; L-histidine from 5-phospho-alpha-D-ribose 1-diphosphate: step 3/9. In terms of biological role, catalyzes the hydrolysis of the adenine ring of phosphoribosyl-AMP. The protein is Phosphoribosyl-AMP cyclohydrolase of Thioalkalivibrio sulfidiphilus (strain HL-EbGR7).